A 159-amino-acid polypeptide reads, in one-letter code: 2-C-methyl-D-erythritol 2,4-cyclodiphosphate synthase (159 aa).

A divalent metal cation contacts are provided by Asp10 and His12. 4-CDP-2-C-methyl-D-erythritol 2-phosphate-binding positions include 10 to 12 (DVH) and 36 to 37 (HS). His44 contributes to the a divalent metal cation binding site. 4-CDP-2-C-methyl-D-erythritol 2-phosphate contacts are provided by residues 58–60 (DIG), 63–67 (FPDTD), 102–108 (AQAPKMA), 134–137 (TTTE), Phe141, 141–144 (FTGR), and Arg144.

It belongs to the IspF family. As to quaternary structure, homotrimer. It depends on a divalent metal cation as a cofactor.

It carries out the reaction 4-CDP-2-C-methyl-D-erythritol 2-phosphate = 2-C-methyl-D-erythritol 2,4-cyclic diphosphate + CMP. It functions in the pathway isoprenoid biosynthesis; isopentenyl diphosphate biosynthesis via DXP pathway; isopentenyl diphosphate from 1-deoxy-D-xylulose 5-phosphate: step 4/6. In terms of biological role, involved in the biosynthesis of isopentenyl diphosphate (IPP) and dimethylallyl diphosphate (DMAPP), two major building blocks of isoprenoid compounds. Catalyzes the conversion of 4-diphosphocytidyl-2-C-methyl-D-erythritol 2-phosphate (CDP-ME2P) to 2-C-methyl-D-erythritol 2,4-cyclodiphosphate (ME-CPP) with a corresponding release of cytidine 5-monophosphate (CMP). The chain is 2-C-methyl-D-erythritol 2,4-cyclodiphosphate synthase from Shewanella oneidensis (strain ATCC 700550 / JCM 31522 / CIP 106686 / LMG 19005 / NCIMB 14063 / MR-1).